The primary structure comprises 159 residues: Neuroglobin (159 aa).

Residues 3–151 (KLSSKDKELI…VVASMSRGWA (149 aa)) form the Globin domain. Positions 66 and 98 each coordinate heme b.

This sequence belongs to the globin family. As to quaternary structure, monomer. Homodimers and homotetramers. Mainly monomeric but also detected as part of homodimers and homotetramers.

It is found in the cytoplasm. The protein resides in the cytosol. It localises to the mitochondrion matrix. The catalysed reaction is Fe(III)-heme b-[protein] + nitric oxide + H2O = Fe(II)-heme b-[protein] + nitrite + 2 H(+). In terms of biological role, monomeric globin with a bis-histidyl six-coordinate heme-iron atom through which it can bind dioxygen, carbon monoxide and nitric oxide. Could help transport oxygen and increase its availability to the metabolically active neuronal tissues, though its low quantity in tissues as well as its high affinity for dioxygen, which may limit its oxygen-releasing ability, argue against it. The ferrous/deoxygenated form exhibits a nitrite reductase activity and it could produce nitric oxide which in turn inhibits cellular respiration in response to hypoxia. In its ferrous/deoxygenated state, it may also exhibit GDI (Guanine nucleotide Dissociation Inhibitor) activity toward heterotrimeric G-alpha proteins, thereby regulating signal transduction to facilitate neuroprotective responses in the wake of hypoxia and associated oxidative stress. The protein is Neuroglobin (ngb) of Tetraodon nigroviridis (Spotted green pufferfish).